The sequence spans 441 residues: Ribosomal protein uS12 methylthiotransferase RimO (441 aa).

The MTTase N-terminal domain maps to 6–116 (PKVGFVSLGC…VMTAVHANLP (111 aa)). Residues Cys15, Cys51, Cys80, Cys147, Cys151, and Cys154 each coordinate [4Fe-4S] cluster. A Radical SAM core domain is found at 133 to 370 (LTPQHYAYLK…MEVQESISAE (238 aa)). A TRAM domain is found at 373-439 (RRKIGRIETV…GHDLWAAPPA (67 aa)).

This sequence belongs to the methylthiotransferase family. RimO subfamily. [4Fe-4S] cluster serves as cofactor.

Its subcellular location is the cytoplasm. It catalyses the reaction L-aspartate(89)-[ribosomal protein uS12]-hydrogen + (sulfur carrier)-SH + AH2 + 2 S-adenosyl-L-methionine = 3-methylsulfanyl-L-aspartate(89)-[ribosomal protein uS12]-hydrogen + (sulfur carrier)-H + 5'-deoxyadenosine + L-methionine + A + S-adenosyl-L-homocysteine + 2 H(+). Catalyzes the methylthiolation of an aspartic acid residue of ribosomal protein uS12. The protein is Ribosomal protein uS12 methylthiotransferase RimO of Methylobacillus flagellatus (strain ATCC 51484 / DSM 6875 / VKM B-1610 / KT).